A 453-amino-acid polypeptide reads, in one-letter code: Signal transduction histidine-protein kinase ArlS (453 aa).

Transmembrane regions (helical) follow at residues 14–34 and 157–177; these read ITTLIMFSTIILFCLVIIFFL and FVAIAFGLLATFIMAGISYIF. An HAMP domain is found at 179 to 232; sequence TQLTKPLVTMSNKMIQIRRDGFQNKLELKTNYEETDNLIDTFNDMMYQIEESFN. The Histidine kinase domain occupies 240 to 453; that stretch reads DASHELRTPL…QYTTFKIIFK (214 aa). The residue at position 243 (histidine 243) is a Phosphohistidine; by autocatalysis.

Autophosphorylated.

It localises to the cell membrane. The catalysed reaction is ATP + protein L-histidine = ADP + protein N-phospho-L-histidine.. Its function is as follows. Member of the two-component regulatory system ArlS/ArlR. ArlS probably functions as a sensor protein kinase which is autophosphorylated at a histidine residue and transfers its phosphate group to ArlR. In Staphylococcus haemolyticus (strain JCSC1435), this protein is Signal transduction histidine-protein kinase ArlS (arlS).